The following is a 195-amino-acid chain: Matrix protein (195 aa).

It belongs to the novirhabdovirus matrix protein family. Homomultimer.

Its subcellular location is the virion. It localises to the host cytoplasm. The M protein has a crucial role in virus assembly and interacts with the RNP complex as well as with the viral membrane. The chain is Matrix protein (M) from Salmo (IHNV).